Consider the following 545-residue polypeptide: Chaperonin GroEL 1 (545 aa).

ATP-binding positions include 30 to 33, K51, 87 to 91, G415, and D496; these read TLGP and DGTTT.

It belongs to the chaperonin (HSP60) family. Forms a cylinder of 14 subunits composed of two heptameric rings stacked back-to-back. Interacts with the co-chaperonin GroES.

The protein resides in the cytoplasm. It catalyses the reaction ATP + H2O + a folded polypeptide = ADP + phosphate + an unfolded polypeptide.. Its function is as follows. Together with its co-chaperonin GroES, plays an essential role in assisting protein folding. The GroEL-GroES system forms a nano-cage that allows encapsulation of the non-native substrate proteins and provides a physical environment optimized to promote and accelerate protein folding. This chain is Chaperonin GroEL 1, found in Nitrobacter hamburgensis (strain DSM 10229 / NCIMB 13809 / X14).